The sequence spans 305 residues: Glutaminase (305 aa).

The substrate site is built by S63, N113, E158, N165, Y189, Y241, and V259.

This sequence belongs to the glutaminase family. As to quaternary structure, homotetramer.

The catalysed reaction is L-glutamine + H2O = L-glutamate + NH4(+). The polypeptide is Glutaminase (Aliarcobacter butzleri (strain RM4018) (Arcobacter butzleri)).